The chain runs to 133 residues: uncharacterized protein (133 aa).

The helical transmembrane segment at Y11 to T31 threads the bilayer.

It localises to the membrane. This is an uncharacterized protein from Borreliella burgdorferi (strain ATCC 35210 / DSM 4680 / CIP 102532 / B31) (Borrelia burgdorferi).